The primary structure comprises 62 residues: Large ribosomal subunit protein bL32 (62 aa).

The span at 1 to 16 (MAVPKRKTSPSRRGMR) shows a compositional bias: basic residues. A disordered region spans residues 1 to 62 (MAVPKRKTSP…QILKPKTAEV (62 aa)). Over residues 28–44 (VEDKDSGELRRPHHLDL) the composition is skewed to basic and acidic residues.

The protein belongs to the bacterial ribosomal protein bL32 family.

This is Large ribosomal subunit protein bL32 from Azorhizobium caulinodans (strain ATCC 43989 / DSM 5975 / JCM 20966 / LMG 6465 / NBRC 14845 / NCIMB 13405 / ORS 571).